Reading from the N-terminus, the 296-residue chain is NAD kinase (296 aa).

The active-site Proton acceptor is Asp-72. NAD(+) is bound by residues 72–73 (DG), 146–147 (ND), Arg-157, Lys-174, Asp-176, 187–192 (TAYALS), and Gln-247.

This sequence belongs to the NAD kinase family. Requires a divalent metal cation as cofactor.

It localises to the cytoplasm. It catalyses the reaction NAD(+) + ATP = ADP + NADP(+) + H(+). Its function is as follows. Involved in the regulation of the intracellular balance of NAD and NADP, and is a key enzyme in the biosynthesis of NADP. Catalyzes specifically the phosphorylation on 2'-hydroxyl of the adenosine moiety of NAD to yield NADP. This is NAD kinase from Pseudomonas savastanoi pv. phaseolicola (strain 1448A / Race 6) (Pseudomonas syringae pv. phaseolicola (strain 1448A / Race 6)).